Consider the following 467-residue polypeptide: UDP-N-acetylmuramoylalanine--D-glutamate ligase (467 aa).

ATP is bound at residue 118–124; that stretch reads GTNGKTT.

The protein belongs to the MurCDEF family.

The protein localises to the cytoplasm. The catalysed reaction is UDP-N-acetyl-alpha-D-muramoyl-L-alanine + D-glutamate + ATP = UDP-N-acetyl-alpha-D-muramoyl-L-alanyl-D-glutamate + ADP + phosphate + H(+). It participates in cell wall biogenesis; peptidoglycan biosynthesis. In terms of biological role, cell wall formation. Catalyzes the addition of glutamate to the nucleotide precursor UDP-N-acetylmuramoyl-L-alanine (UMA). The protein is UDP-N-acetylmuramoylalanine--D-glutamate ligase of Streptomyces avermitilis (strain ATCC 31267 / DSM 46492 / JCM 5070 / NBRC 14893 / NCIMB 12804 / NRRL 8165 / MA-4680).